Consider the following 397-residue polypeptide: Elongation factor Tu (397 aa).

In terms of domain architecture, tr-type G spans leucine 10–glutamate 207. The tract at residues glycine 19–threonine 26 is G1. Position 19–26 (glycine 19–threonine 26) interacts with GTP. Residue threonine 26 coordinates Mg(2+). The tract at residues glycine 60 to asparagine 64 is G2. The interval aspartate 81–glycine 84 is G3. Residues aspartate 81–histidine 85 and asparagine 136–aspartate 139 each bind GTP. The tract at residues asparagine 136–aspartate 139 is G4. Residues serine 174–arginine 176 are G5.

It belongs to the TRAFAC class translation factor GTPase superfamily. Classic translation factor GTPase family. EF-Tu/EF-1A subfamily. Monomer.

The protein resides in the cytoplasm. It carries out the reaction GTP + H2O = GDP + phosphate + H(+). GTP hydrolase that promotes the GTP-dependent binding of aminoacyl-tRNA to the A-site of ribosomes during protein biosynthesis. In Pseudomonas syringae pv. tomato (strain ATCC BAA-871 / DC3000), this protein is Elongation factor Tu.